We begin with the raw amino-acid sequence, 156 residues long: Succinate dehydrogenase assembly factor 2-B, mitochondrial (156 aa).

Residues 1–24 (MLRQLIVSTVGRRMPLQMISQSRL) constitute a mitochondrion transit peptide.

Belongs to the SDHAF2 family. As to quaternary structure, interacts with the flavoprotein subunit within the SDH catalytic dimer.

The protein resides in the mitochondrion matrix. Plays an essential role in the assembly of succinate dehydrogenase (SDH), an enzyme complex (also referred to as respiratory complex II) that is a component of both the tricarboxylic acid (TCA) cycle and the mitochondrial electron transport chain, and which couples the oxidation of succinate to fumarate with the reduction of ubiquinone (coenzyme Q) to ubiquinol. Required for flavinylation (covalent attachment of FAD) of the flavoprotein subunit of the SDH catalytic dimer. The polypeptide is Succinate dehydrogenase assembly factor 2-B, mitochondrial (Drosophila erecta (Fruit fly)).